A 1411-amino-acid chain; its full sequence is MLRRILQRTPGRVGSQGSDLDSSATPINTVDVNNESSSEGFICPQCMKSLGSADELFKHYEAVHDAGNDSGHGGESNLALKRDDVTLLRQEVQDLQASLKEEKWYSEELKKELEKYQGLQQQEAKPDGLVTDSSAELQSLEQQLEEAQTENFNIKQMKDLFEQKAAQLATEIADIKSKYDEERSLREAAEQKVTRLTEELNKEATVIQDLKTELLQRPGIEDVAVLKKELVQVQTLMDNMTLERERESEKLKDECKKLQSQYASSEATISQLRSELAKGPQEVAVYVQELQKLKSSVNELTQKNQTLTENLLKKEQDYTKLEEKHNEESVSKKNIQATLHQKDLDCQQLQSRLSASETSLHRIHVELSEKGEATQKLKEELSEVETKYQHLKAEFKQLQQQREEKEQHGLQLQSEINQLHSKLLETERQLGEAHGRLKEQRQLSSEKLMDKEQQVADLQLKLSRLEEQLKEKVTNSTELQHQLDKTKQQHQEQQALQQSTTAKLREAQNDLEQVLRQIGDKDQKIQNLEALLQKSKENISLLEKEREDLYAKIQAGEGETAVLNQLQEKNHTLQEQVTQLTEKLKNQSESHKQAQENLHDQVQEQKAHLRAAQDRVLSLETSVNELNSQLNESKEKVSQLDIQIKAKTELLLSAEAAKTAQRADLQNHLDTAQNALQDKQQELNKITTQLDQVTAKLQDKQEHCSQLESHLKEYKEKYLSLEQKTEELEGQIKKLEADSLEVKASKEQALQDLQQQRQLNTDLELRATELSKQLEMEKEIVSSTRLDLQKKSEALESIKQKLTKQEEEKKILKQDFETLSQETKIQHEELNNRIQTTVTELQKVKMEKEALMTELSTVKDKLSKVSDSLKNSKSEFEKENQKGKAAILDLEKTCKELKHQLQVQMENTLKEQKELKKSLEKEKEASHQLKLELNSMQEQLIQAQNTLKQNEKEEQQLQGNINELKQSSEQKKKQIEALQGELKIAVLQKTELENKLQQQLTQAAQELAAEKEKISVLQNNYEKSQETFKQLQSDFYGRESELLATRQDLKSVEEKLSLAQEDLISNRNQIGNQNKLIQELKTAKATLEQDSAKKEQQLQERCKALQDIQKEKSLKEKELVNEKSKLAEIEEIKCRQEKEITKLNEELKSHKLESIKEITNLKDAKQLLIQQKLELQGKADSLKAAVEQEKRNQQILKDQVKKEEEELKKEFIEKEAKLHSEIKEKEVGMKKHEENEAKLTMQITALNENLGTVKKEWQSSQRRVSELEKQTDDLRGEIAVLEATVQNNQDERRALLERCLKGEGEIEKLQTKVLELQRKLDNTTAAVQELGRENQSLQIKHTQALNRKWAEDNEVQNCMACGKGFSVTVRRHHCRQCGNIFCAECSAKNALTPSSKKPVRVCDACFNDLQG.

A disordered region spans residues 1–27; that stretch reads MLRRILQRTPGRVGSQGSDLDSSATPI. Positions 15-27 are enriched in polar residues; the sequence is SQGSDLDSSATPI. The C2H2-type zinc finger occupies 41–64; the sequence is FICPQCMKSLGSADELFKHYEAVH. Phosphoserine occurs at positions 52 and 70. Residues 74–1348 are a coiled coil; sequence GESNLALKRD…IKHTQALNRK (1275 aa). Positions 473–501 are disordered; sequence VTNSTELQHQLDKTKQQHQEQQALQQSTT. The segment covering 481-490 has biased composition (basic and acidic residues); the sequence is HQLDKTKQQH. An FYVE-type zinc finger spans residues 1352-1410; that stretch reads DNEVQNCMACGKGFSVTVRRHHCRQCGNIFCAECSAKNALTPSSKKPVRVCDACFNDLQ. Cysteine 1358, cysteine 1361, cysteine 1374, cysteine 1377, cysteine 1382, cysteine 1385, cysteine 1402, and cysteine 1405 together coordinate Zn(2+).

In terms of assembly, homodimer. Binds STX6. Binds RAB5A, RAB5B, RAB5C and RAB22A that have been activated by GTP-binding. Interacts with RAB31. Interacts with ERBB2. Interacts with SAMD9 and SAMD9L. May interact with PLEKHF2.

The protein resides in the cytoplasm. It localises to the early endosome membrane. Its function is as follows. Binds phospholipid vesicles containing phosphatidylinositol 3-phosphate and participates in endosomal trafficking. This chain is Early endosome antigen 1 (EEA1), found in Homo sapiens (Human).